The following is a 570-amino-acid chain: MNHFRKMEVINLTTLPMIPVDEHLAVSLVARNTMVKTVRKELENNPPSCLIGSMHQVNQKIADINLRTEPSANSLAIERFELEKKALREKTRSSPEDKVKRQRKSQYSCKGSELRHARSSVIKRKTADKNLLAELYQYSNFNSSKPNKLPNGVDFCDMVGNVVRAERDCLSGKHFCSGRELEKFLSSSSPRAIWLDSFWWIFHERYQPNKELQNNLFDRIAQHYALLLFRVPKSHSEEALLKRLPSLLSKAVYTSFCCCFPQSWFDTHEFKSDICNTMSLWISGTYPSPQSYDSWDYSELDPERFRREELMLYRRRLTKGREFSLFAGKRAFSQKPAQSRKFYHPQSSSANSPSEKTSSAKQNSEKSLRMQNTAKEHHCQTLVLKKPTQEVKRISEARECENMFPKKSCAACKSPELTSNLFNIYGKSPLIVYFLQNYASLQQHGKNVLIVRREKTTSTPDCTPTYTDVISETLCSMKKRKDNLNQLYQHHWTEWNYFDKHLKELQDNFSREMKNIDPKAADTKKANHMFIPPSAVNEESPDKKTKEGKGGEGKRRETEVEHFFPLTSKP.

Over residues 87 to 99 (LREKTRSSPEDKV) the composition is skewed to basic and acidic residues. Disordered stretches follow at residues 87–112 (LREK…CKGS), 336–374 (PAQS…QNTA), and 519–570 (KAAD…TSKP). Residue Tyr343 is modified to Phosphotyrosine. Residues 345-362 (PQSSSANSPSEKTSSAKQ) show a composition bias toward polar residues. Residues Ser348 and Ser349 each carry the phosphoserine modification. Basic and acidic residues-rich tracts occupy residues 363-374 (NSEKSLRMQNTA) and 540-562 (SPDK…EVEH).

The protein belongs to the FAM227 family.

This is Protein FAM227A (FAM227A) from Homo sapiens (Human).